Consider the following 123-residue polypeptide: Protein Wnt-3b (123 aa).

S1 carries O-palmitoleoyl serine; by PORCN lipidation. The cysteines at positions 89 and 104 are disulfide-linked. N-linked (GlcNAc...) asparagine glycosylation is present at N90.

The protein belongs to the Wnt family. Post-translationally, palmitoleoylation is required for efficient binding to frizzled receptors. Depalmitoleoylation leads to Wnt signaling pathway inhibition.

The protein localises to the secreted. The protein resides in the extracellular space. It localises to the extracellular matrix. Ligand for members of the frizzled family of seven transmembrane receptors. Probable developmental protein. May be a signaling molecule which affects the development of discrete regions of tissues. Is likely to signal over only few cell diameters. This chain is Protein Wnt-3b (WNT-3B), found in Alopias vulpinus (Common thresher shark).